Reading from the N-terminus, the 402-residue chain is Exodeoxyribonuclease 7 large subunit (402 aa).

It belongs to the XseA family. As to quaternary structure, heterooligomer composed of large and small subunits.

It localises to the cytoplasm. It catalyses the reaction Exonucleolytic cleavage in either 5'- to 3'- or 3'- to 5'-direction to yield nucleoside 5'-phosphates.. In terms of biological role, bidirectionally degrades single-stranded DNA into large acid-insoluble oligonucleotides, which are then degraded further into small acid-soluble oligonucleotides. This Streptomyces coelicolor (strain ATCC BAA-471 / A3(2) / M145) protein is Exodeoxyribonuclease 7 large subunit.